Consider the following 230-residue polypeptide: Cytochrome c-552 (230 aa).

The signal sequence occupies residues 1–47; it reads MTTYLSQDRLRNKENDTMTYQHSKMYQSRTFLLFSALLLVAGQASAA. Positions 63, 66, 67, 166, 169, and 170 each coordinate heme c.

Binds 2 heme c groups covalently per subunit.

The protein localises to the periplasm. In terms of biological role, diheme, high potential cytochrome c. This chain is Cytochrome c-552 (cyc1), found in Acidithiobacillus ferridurans.